Reading from the N-terminus, the 94-residue chain is Large ribosomal subunit protein uL23 (94 aa).

This sequence belongs to the universal ribosomal protein uL23 family. As to quaternary structure, part of the 50S ribosomal subunit. Contacts protein L29, and trigger factor when it is bound to the ribosome.

One of the early assembly proteins it binds 23S rRNA. One of the proteins that surrounds the polypeptide exit tunnel on the outside of the ribosome. Forms the main docking site for trigger factor binding to the ribosome. The sequence is that of Large ribosomal subunit protein uL23 from Lysinibacillus sphaericus (strain C3-41).